Consider the following 347-residue polypeptide: MQVTRIIPDVPSFLASMMTFDTWSILFMVVQSLVIFLVVVIVAAMMIIYERRMLALWQDRYGPNRVGPFGSLQLVADMLKIFFKEDWTPNFTDKFMFTLAPAVAMFTALASFAIIPISPTLGVADWDIGILFFFAMAGIAVYAVLFGGWASANKFSLLGGLRSAAQTISYEVFLGLSLMGVVALTGSFNLRAIVEAQADGWYIIPQFFGFLTFVVAGVAVTHRHPFDQPEAEQELAEGYHVEYSGMKFGMFFIGEYVNVVLISALMTCLFFGGWLAPFNLDIPFIPPAFWFMIKTLFFMTMFILARGSLMRPRYDQVMNFGWKVCLPVTLINLLVTAAVILIFSPTL.

A run of 8 helical transmembrane segments spans residues 25–45 (ILFM…VAAM), 95–115 (FMFT…FAII), 128–148 (IGIL…LFGG), 168–188 (ISYE…TGSF), 200–220 (GWYI…GVAV), 251–271 (FFIG…CLFF), 284–304 (FIPP…MFIL), and 324–344 (VCLP…LIFS).

It belongs to the complex I subunit 1 family. As to quaternary structure, NDH-1 is composed of 14 different subunits. Subunits NuoA, H, J, K, L, M, N constitute the membrane sector of the complex.

It localises to the cell inner membrane. It catalyses the reaction a quinone + NADH + 5 H(+)(in) = a quinol + NAD(+) + 4 H(+)(out). NDH-1 shuttles electrons from NADH, via FMN and iron-sulfur (Fe-S) centers, to quinones in the respiratory chain. The immediate electron acceptor for the enzyme in this species is believed to be ubiquinone. Couples the redox reaction to proton translocation (for every two electrons transferred, four hydrogen ions are translocated across the cytoplasmic membrane), and thus conserves the redox energy in a proton gradient. This subunit may bind ubiquinone. The protein is NADH-quinone oxidoreductase subunit H of Psychrobacter arcticus (strain DSM 17307 / VKM B-2377 / 273-4).